The chain runs to 1483 residues: Heme-responsive zinc finger transcription factor HAP1 (1483 aa).

Residues methionine 1–serine 50 are compositionally biased toward polar residues. Residues methionine 1–lysine 56 are disordered. Residues cysteine 64, cysteine 67, cysteine 74, cysteine 81, cysteine 84, and cysteine 93 each contribute to the Zn(2+) site. A DNA-binding region (zn(2)-C6 fungal-type) is located at residues cysteine 64 to cysteine 93. The stretch at glutamate 105–serine 134 forms a coiled coil. The interval lysine 126–asparagine 208 is disordered. A compositionally biased stretch (low complexity) spans lysine 130–serine 142. Polar residues-rich tracts occupy residues tyrosine 143–phenylalanine 152 and threonine 160–histidine 176. Positions glutamine 177–asparagine 208 are enriched in low complexity. The heme-responsive; required for HMC formation stretch occupies residues lysine 244–serine 444. HRM repeat units follow at residues lysine 280–histidine 285, lysine 299–histidine 304, lysine 323–histidine 328, arginine 347–histidine 352, lysine 389–histidine 394, and arginine 415–histidine 420. 2 stretches are compositionally biased toward polar residues: residues serine 432–histidine 447 and glutamine 706–leucine 734. 2 disordered regions span residues serine 432–histidine 458 and glutamine 706–glutamine 767. Over residues asparagine 735–asparagine 759 the composition is skewed to low complexity. The HRM 7 repeat unit spans residues lysine 1192–glutamine 1197.

In terms of assembly, binds DNA as a homodimer. Interacts with SRO9 and YDJ1. In the absence of heme, binds to at least four cellular proteins, including YDJ1 and SRO9, forming a high-molecular-weight complex (HMC) which results in repression of its activity and dictates its DNA-binding specificity.

It is found in the nucleus. Its function is as follows. Regulation of oxygen dependent gene expression. It modulates the expression of Iso-1 (CYP1) and Iso-2 (CYP3) cytochrome c. In response to heme, promotes transcription of genes encoding functions required for respiration, controlling oxidative damage and repression of anaerobic genes. Binds to the sequence 5'-CGGNNNTNNCGG-3'. In Saccharomyces cerevisiae (strain Lalvin EC1118 / Prise de mousse) (Baker's yeast), this protein is Heme-responsive zinc finger transcription factor HAP1 (HAP1).